The sequence spans 366 residues: Variable large protein 10 (366 aa).

Residues 1–18 (MRKRISAIIMTLFMVLAS) form the signal peptide. Residue Cys-19 is the site of N-palmitoyl cysteine attachment. Cys-19 carries S-diacylglycerol cysteine lipidation.

This sequence belongs to the variable large protein (Vlp) family. Beta subfamily.

The protein resides in the cell outer membrane. In terms of biological role, the Vlp and Vsp proteins are antigenically distinct proteins, only one vlp or vsp gene is transcriptionally active at any one time. Switching between these genes is a mechanism of host immune response evasion. The protein is Variable large protein 10 of Borrelia hermsii.